The primary structure comprises 227 residues: ATP-dependent Clp protease proteolytic subunit 1 (227 aa).

S124 (nucleophile) is an active-site residue. H149 is an active-site residue.

The protein belongs to the peptidase S14 family. As to quaternary structure, fourteen ClpP subunits assemble into 2 heptameric rings which stack back to back to give a disk-like structure with a central cavity, resembling the structure of eukaryotic proteasomes.

The protein localises to the cytoplasm. It carries out the reaction Hydrolysis of proteins to small peptides in the presence of ATP and magnesium. alpha-casein is the usual test substrate. In the absence of ATP, only oligopeptides shorter than five residues are hydrolyzed (such as succinyl-Leu-Tyr-|-NHMec, and Leu-Tyr-Leu-|-Tyr-Trp, in which cleavage of the -Tyr-|-Leu- and -Tyr-|-Trp bonds also occurs).. Cleaves peptides in various proteins in a process that requires ATP hydrolysis. Has a chymotrypsin-like activity. Plays a major role in the degradation of misfolded proteins. The sequence is that of ATP-dependent Clp protease proteolytic subunit 1 from Rhodopirellula baltica (strain DSM 10527 / NCIMB 13988 / SH1).